Consider the following 221-residue polypeptide: Protein FixW (221 aa).

A Thioredoxin domain is found at 5–156; that stretch reads LNLGSPAPPI…LPKVIDGNWR (152 aa). An intrachain disulfide couples Cys43 to Cys46.

It belongs to the thioredoxin family.

This chain is Protein FixW (fixW), found in Rhizobium leguminosarum.